The sequence spans 240 residues: Cysteine-rich venom protein (240 aa).

Positions M1 to G19 are cleaved as a signal peptide. Positions D39 to Y166 constitute an SCP domain. 8 disulfide bridges follow: C75–C153, C92–C167, C148–C164, C186–C193, C189–C198, C202–C235, C211–C229, and C220–C233. Residues C202–C235 enclose the ShKT domain.

This sequence belongs to the CRISP family. As to expression, expressed by the venom gland.

The protein resides in the secreted. Functionally, blocks contraction of smooth muscle elicited by high potassium-induced depolarization, but does not block caffeine-stimulated contraction. May target voltage-gated calcium channels on smooth muscle. The sequence is that of Cysteine-rich venom protein from Protobothrops jerdonii (Jerdon's pitviper).